Consider the following 362-residue polypeptide: DSTQALTTAWKEACASASPSTILVPKGNFAVGLITLEGPCKSSIGLQLQGTLKAPADPSKIKGLGWINLNKIDLLTIFGGGVFDGQGKSAWVQNDCHKNGPICKTLSMNLRLYAVTNSILRDVTTLDSKNFHVNVIGCKNLTFERFKISAAETSINTDGIHIGRSDGVNIINTEIKTGDDCISLGDGSKNINITNITCGPGHGISVGSLGRYKNEESVVGIYVKNCTITGSQNGVRIKTWPKSEPGEASEMHFQDITMNSVGTPILIDQGYCPYNQCTAEVPSSVKLSKISFKNIKGTSTTKEAVKLVCSKSFPCNGVELADIDLTYSGKGGPATSVCENIKPTIKGKQIPAICSGSAAKAA.

PbH1 repeat units follow at residues 138 to 164 (CKNLTFERFKISAAETSINTDGIHIGR), 165 to 186 (SDGVNIINTEIKTGDDCISLGD), 188 to 208 (SKNINITNITCGPGHGISVGS), and 218 to 239 (VVGIYVKNCTITGSQNGVRIKT). Residue N140 is glycosylated (N-linked (GlcNAc...) asparagine). D179 functions as the Proton donor in the catalytic mechanism. N192 and N195 each carry an N-linked (GlcNAc...) asparagine glycan. Residue H202 is part of the active site. N-linked (GlcNAc...) asparagine glycosylation occurs at N225.

This sequence belongs to the glycosyl hydrolase 28 family. As to expression, pollen tubes growing through the style during pollination.

It is found in the secreted. It localises to the cell wall. It carries out the reaction [(1-&gt;4)-alpha-D-galacturonosyl](n) + H2O = alpha-D-galacturonate + [(1-&gt;4)-alpha-D-galacturonosyl](n-1). May function in depolymerizing pectin during pollen development, germination, and tube growth. Acts as an exo-polygalacturonase. The sequence is that of Exopolygalacturonase from Oenothera organensis (Evening primrose).